Reading from the N-terminus, the 270-residue chain is 5'-nucleotidase SurE (270 aa).

A divalent metal cation is bound by residues Asp14, Asp15, Ser46, and Asn104.

This sequence belongs to the SurE nucleotidase family. A divalent metal cation serves as cofactor.

Its subcellular location is the cytoplasm. The enzyme catalyses a ribonucleoside 5'-phosphate + H2O = a ribonucleoside + phosphate. Nucleotidase that shows phosphatase activity on nucleoside 5'-monophosphates. The polypeptide is 5'-nucleotidase SurE (Microcystis aeruginosa (strain NIES-843 / IAM M-2473)).